A 237-amino-acid chain; its full sequence is Class B acid phosphatase (237 aa).

Positions 1-25 are cleaved as a signal peptide; it reads MRKLTLAFAAASLLFTLNSAVVARA. Catalysis depends on D69, which acts as the Nucleophile. Residues D69 and D71 each contribute to the Mg(2+) site. D71 (proton donor) is an active-site residue. Substrate is bound by residues 137 to 138 and K177; that span reads TG. Mg(2+) is bound at residue D192.

The protein belongs to the class B bacterial acid phosphatase family. Homotetramer. Mg(2+) is required as a cofactor.

It localises to the periplasm. The catalysed reaction is a phosphate monoester + H2O = an alcohol + phosphate. In terms of biological role, dephosphorylates several organic phosphate monoesters. Also has a phosphotransferase activity catalyzing the transfer of low-energy phosphate groups from organic phosphate monoesters to free hydroxyl groups of various organic compounds. The polypeptide is Class B acid phosphatase (Klebsiella pneumoniae (strain 342)).